Reading from the N-terminus, the 453-residue chain is Serine--tRNA ligase (453 aa).

Position 249-251 (249-251) interacts with L-serine; the sequence is TSE. ATP contacts are provided by residues 280-282 and V296; that span reads RKE. E303 contributes to the L-serine binding site. 367-370 lines the ATP pocket; the sequence is EMVS. T404 provides a ligand contact to L-serine.

The protein belongs to the class-II aminoacyl-tRNA synthetase family. Type-1 seryl-tRNA synthetase subfamily. In terms of assembly, homodimer. The tRNA molecule binds across the dimer.

Its subcellular location is the cytoplasm. The enzyme catalyses tRNA(Ser) + L-serine + ATP = L-seryl-tRNA(Ser) + AMP + diphosphate + H(+). The catalysed reaction is tRNA(Sec) + L-serine + ATP = L-seryl-tRNA(Sec) + AMP + diphosphate + H(+). The protein operates within aminoacyl-tRNA biosynthesis; selenocysteinyl-tRNA(Sec) biosynthesis; L-seryl-tRNA(Sec) from L-serine and tRNA(Sec): step 1/1. Its function is as follows. Catalyzes the attachment of serine to tRNA(Ser). Is also able to aminoacylate tRNA(Sec) with serine, to form the misacylated tRNA L-seryl-tRNA(Sec), which will be further converted into selenocysteinyl-tRNA(Sec). The polypeptide is Serine--tRNA ligase (Archaeoglobus fulgidus (strain ATCC 49558 / DSM 4304 / JCM 9628 / NBRC 100126 / VC-16)).